A 274-amino-acid chain; its full sequence is ATP synthase subunit a (274 aa).

5 consecutive transmembrane segments (helical) span residues 43–63 (TLNI…LFVF), 103–123 (VIAP…MMDL), 149–169 (DVSI…FYSI), 223–243 (LIFI…LSLP), and 245–265 (AIFH…LTIV).

It belongs to the ATPase A chain family. In terms of assembly, F-type ATPases have 2 components, CF(1) - the catalytic core - and CF(0) - the membrane proton channel. CF(1) has five subunits: alpha(3), beta(3), gamma(1), delta(1), epsilon(1). CF(0) has three main subunits: a(1), b(2) and c(9-12). The alpha and beta chains form an alternating ring which encloses part of the gamma chain. CF(1) is attached to CF(0) by a central stalk formed by the gamma and epsilon chains, while a peripheral stalk is formed by the delta and b chains.

It localises to the cell inner membrane. Its function is as follows. Key component of the proton channel; it plays a direct role in the translocation of protons across the membrane. The protein is ATP synthase subunit a of Yersinia enterocolitica serotype O:8 / biotype 1B (strain NCTC 13174 / 8081).